The following is a 71-amino-acid chain: MSFGTRLLLFLILTLPLVTSSSPNTLHVSGIVKTGTTSRFLMMTIEDYDDPSANTRHDPSVPTNAKADTTP.

The first 20 residues, 1-20 (MSFGTRLLLFLILTLPLVTS), serve as a signal peptide directing secretion. The propeptide occupies 21 to 46 (SSPNTLHVSGIVKTGTTSRFLMMTIE). Tyr48 is subject to Sulfotyrosine. Residues 50 to 71 (DPSANTRHDPSVPTNAKADTTP) are disordered. Residues 61-71 (VPTNAKADTTP) show a composition bias toward polar residues. The residue at position 62 (Pro62) is a 4-hydroxyproline. Pro62 carries an O-linked (Ara...) hydroxyproline glycan. The propeptide occupies 65–71 (AKADTTP).

It belongs to the sulfated-peptide plant hormone family. In terms of processing, the sulfation and the glycosylation are required for full activity.

It is found in the secreted. Functionally, promotes cellular proliferation and expansion. This is Protein PSY2 (PSY2) from Arabidopsis thaliana (Mouse-ear cress).